Consider the following 208-residue polypeptide: MSKVLFVKANDRPAEQAVSSKMYETFVSTYKEANPNTEITELDLFALDLPYYGNIAISGGYKRSQGMELTAEEEKAVATVDQYLNQFLEADKVVFAFPLWNFTVPAPLITYISYLSQAGKTFKYTANGPEGLAGGKKVVVLGARGSDYSSEQMAPMEMAVNYVTTVLGFWGITNPETVVIEGHNQYPDRSQQIVEEGLEKVKKVAAKF.

It belongs to the azoreductase type 1 family. As to quaternary structure, homodimer. It depends on FMN as a cofactor.

The enzyme catalyses 2 a quinone + NADH + H(+) = 2 a 1,4-benzosemiquinone + NAD(+). The catalysed reaction is N,N-dimethyl-1,4-phenylenediamine + anthranilate + 2 NAD(+) = 2-(4-dimethylaminophenyl)diazenylbenzoate + 2 NADH + 2 H(+). In terms of biological role, quinone reductase that provides resistance to thiol-specific stress caused by electrophilic quinones. Its function is as follows. Also exhibits azoreductase activity. Catalyzes the reductive cleavage of the azo bond in aromatic azo compounds to the corresponding amines. The protein is FMN-dependent NADH:quinone oxidoreductase 2 of Bacillus cereus (strain ATCC 10987 / NRS 248).